The sequence spans 127 residues: uncharacterized protein (127 aa).

An N-terminal signal peptide occupies residues 1–16 (MLKKIIFGITISLTTG). Cys-17 carries N-palmitoyl cysteine lipidation. A lipid anchor (S-diacylglycerol cysteine) is attached at Cys-17. The stretch at 56–101 (EVREEIQKYRVEIVDINKKKRELYNRLSKEAQSFLAEQQKYKQKLS) forms a coiled coil. The disordered stretch occupies residues 102–127 (IPKLLIENDPKNNTANSKDNNDKDMK).

It is found in the cell membrane. This is an uncharacterized protein from Rickettsia prowazekii (strain Madrid E).